Here is a 738-residue protein sequence, read N- to C-terminus: Pentatricopeptide repeat-containing protein At5g65570 (738 aa).

PPR repeat units lie at residues 98–128 (AEIS…MSER), 129–163 (HIVT…NVLP), 164–198 (DEYT…GLEV), 200–230 (NVFV…VEEK), 231–265 (DVVL…KVQP), 266–300 (NEYT…GFES), 301–331 (ALAS…IEYP), 332–366 (NQVS…SIKP), 367–401 (NSFT…GFDR), 402–432 (DKYA…LSEV), 433–467 (DVIS…GLQP), 468–502 (NDVT…KIML), and 503–537 (TNDH…DLVL). The segment at 537–612 (LWRTLLSACK…NPAMSWVEIN (76 aa)) is type E motif. Positions 613–644 (KETHTFMAGDLFSHPNSEQILENLEELIKKSK) are type E(+) motif. Residues 645-738 (DLGYVEDKSC…DGSCSCGDYW (94 aa)) are type DYW motif.

Belongs to the PPR family. PCMP-H subfamily.

The protein is Pentatricopeptide repeat-containing protein At5g65570 (PCMP-H47) of Arabidopsis thaliana (Mouse-ear cress).